The chain runs to 371 residues: Vasopressin V2 receptor (371 aa).

The Extracellular portion of the chain corresponds to 1 to 38; the sequence is MLLVSTVSAVPGLFSPPSSPSNSSQEELLDDRDPLLVR. N-linked (GlcNAc...) asparagine glycosylation is present at Asn22. Residues 39–63 traverse the membrane as a helical segment; the sequence is AELALLSTIFVAVALSNGLVLGALI. The Cytoplasmic portion of the chain corresponds to 64–77; that stretch reads RRGRRGRWAPMHVF. A helical transmembrane segment spans residues 78–98; sequence ISHLCLADLAVALFQVLPQLA. Over 99–113 the chain is Extracellular; the sequence is WDATDRFHGPDALCR. The chain crosses the membrane as a helical span at residues 114–135; the sequence is AVKYLQMVGMYASSYMILAMTL. At 136-159 the chain is on the cytoplasmic side; the sequence is DRHRAICRPMLAYRHGGGARWNRP. The chain crosses the membrane as a helical span at residues 160–180; that stretch reads VLVAWAFSLLLSLPQLFIFAQ. The Extracellular segment spans residues 181–200; sequence RDVGNGSGVFDCWARFAEPW. An N-linked (GlcNAc...) asparagine glycan is attached at Asn185. A helical membrane pass occupies residues 201-220; the sequence is GLRAYVTWIALMVFVAPALG. The Cytoplasmic portion of the chain corresponds to 221–271; the sequence is IAACQVLIFREIHASLVPGPSERAGRRRRGRRTGSPSEGAHVSAAMAKTVR. Residues 240 to 260 form a disordered region; sequence PSERAGRRRRGRRTGSPSEGA. The helical transmembrane segment at 272–293 threads the bilayer; it reads MTLVIVIVYVLCWAPFFLVQLW. The Extracellular segment spans residues 294–308; sequence AAWDPEAPLERPPFV. Residues 309-328 traverse the membrane as a helical segment; that stretch reads LLMLLASLNSCTNPWIYASF. Over 329 to 371 the chain is Cytoplasmic; sequence SSSVSSELRSLLCCAQRHTTHSLGPQDESCATASSSLMKDTPS. 2 S-palmitoyl cysteine lipidation sites follow: Cys341 and Cys342. Positions 349 to 371 are disordered; it reads HSLGPQDESCATASSSLMKDTPS. Polar residues predominate over residues 357–371; the sequence is SCATASSSLMKDTPS.

It belongs to the G-protein coupled receptor 1 family. Vasopressin/oxytocin receptor subfamily. As to quaternary structure, interacts with ARRDC4. Identified in a complex containing at least ARRDC4, V2R and HGS. Interacts with TMEM147. As to expression, kidney.

Its subcellular location is the cell membrane. Its function is as follows. Receptor for arginine vasopressin. The activity of this receptor is mediated by G proteins which activate adenylate cyclase. Involved in renal water reabsorption. The chain is Vasopressin V2 receptor (Avpr2) from Rattus norvegicus (Rat).